A 239-amino-acid chain; its full sequence is Ribosomal RNA small subunit methyltransferase G (239 aa).

Residues Gly-78, Phe-83, 129 to 130 (AE), and Arg-148 contribute to the S-adenosyl-L-methionine site.

It belongs to the methyltransferase superfamily. RNA methyltransferase RsmG family.

It localises to the cytoplasm. Functionally, specifically methylates the N7 position of a guanine in 16S rRNA. The protein is Ribosomal RNA small subunit methyltransferase G of Clostridium botulinum (strain ATCC 19397 / Type A).